The primary structure comprises 369 residues: Flagellar P-ring protein (369 aa).

The N-terminal stretch at 1-24 (MSKTISLLKFIICILISLCSFTYA) is a signal peptide.

It belongs to the FlgI family. The basal body constitutes a major portion of the flagellar organelle and consists of four rings (L,P,S, and M) mounted on a central rod.

Its subcellular location is the bacterial flagellum basal body. Functionally, assembles around the rod to form the L-ring and probably protects the motor/basal body from shearing forces during rotation. The sequence is that of Flagellar P-ring protein from Buchnera aphidicola subsp. Schizaphis graminum (strain Sg).